The chain runs to 97 residues: Lipolysis-activating peptide 1-alpha chain (97 aa).

Positions 1-21 (MNIMLFCSVFILVSLTGLSVS) are cleaved as a signal peptide. Residues 25–88 (PGNYPMSLYG…FWAAHKNHCK (64 aa)) form the LCN-type CS-alpha/beta domain. Cystine bridges form between C39-C62, C48-C67, and C52-C69.

Belongs to the long (3 C-C) scorpion toxin superfamily. As to quaternary structure, monomer (edited version) and heterodimer (non-edited version) of this alpha chain and a beta chain (AC P0CI43). As to expression, expressed by the venom gland.

It is found in the secreted. Functionally, the heterodimer non-edited LVP1 induces lipolysis in rat adipocytes. Induction of lipolysis by LVP1 appears to be mediated through the beta-2 adrenergic receptor pathway (ADRB2). The edited BmKBTx-like, similar to beta-toxins, may modulate voltage-gated sodium channels (Nav) and may block voltage-gated potassium channels (Kv). The sequence is that of Lipolysis-activating peptide 1-alpha chain from Lychas mucronatus (Chinese swimming scorpion).